Here is a 334-residue protein sequence, read N- to C-terminus: tRNA N6-adenosine threonylcarbamoyltransferase (334 aa).

The Fe cation site is built by H110 and H114. Substrate is bound by residues 133–137 (IVSGG), D166, G179, D183, and N275. D303 lines the Fe cation pocket.

This sequence belongs to the KAE1 / TsaD family. Fe(2+) is required as a cofactor.

It is found in the cytoplasm. It catalyses the reaction L-threonylcarbamoyladenylate + adenosine(37) in tRNA = N(6)-L-threonylcarbamoyladenosine(37) in tRNA + AMP + H(+). Required for the formation of a threonylcarbamoyl group on adenosine at position 37 (t(6)A37) in tRNAs that read codons beginning with adenine. Is involved in the transfer of the threonylcarbamoyl moiety of threonylcarbamoyl-AMP (TC-AMP) to the N6 group of A37, together with TsaE and TsaB. TsaD likely plays a direct catalytic role in this reaction. The chain is tRNA N6-adenosine threonylcarbamoyltransferase from Salinibacter ruber (strain DSM 13855 / M31).